The sequence spans 347 residues: Holliday junction branch migration complex subunit RuvB (347 aa).

The tract at residues 13–195 is large ATPase domain (RuvB-L); that stretch reads NEDAVTSGEV…FGIVEHMQYY (183 aa). ATP contacts are provided by residues Leu-34, Arg-35, Gly-76, Lys-79, Thr-80, Thr-81, 142-144, Arg-185, Tyr-195, and Arg-232; that span reads EDY. Residue Thr-80 participates in Mg(2+) binding. Positions 196 to 266 are small ATPAse domain (RuvB-S); sequence TIDELEKIVQ…TTEGALKQLQ (71 aa). Positions 269 to 347 are head domain (RuvB-H); sequence DEGLDQTDRR…QLGLPVPGDK (79 aa). Arg-329 serves as a coordination point for DNA.

This sequence belongs to the RuvB family. Homohexamer. Forms an RuvA(8)-RuvB(12)-Holliday junction (HJ) complex. HJ DNA is sandwiched between 2 RuvA tetramers; dsDNA enters through RuvA and exits via RuvB. An RuvB hexamer assembles on each DNA strand where it exits the tetramer. Each RuvB hexamer is contacted by two RuvA subunits (via domain III) on 2 adjacent RuvB subunits; this complex drives branch migration. In the full resolvosome a probable DNA-RuvA(4)-RuvB(12)-RuvC(2) complex forms which resolves the HJ.

It is found in the cytoplasm. The enzyme catalyses ATP + H2O = ADP + phosphate + H(+). The RuvA-RuvB-RuvC complex processes Holliday junction (HJ) DNA during genetic recombination and DNA repair, while the RuvA-RuvB complex plays an important role in the rescue of blocked DNA replication forks via replication fork reversal (RFR). RuvA specifically binds to HJ cruciform DNA, conferring on it an open structure. The RuvB hexamer acts as an ATP-dependent pump, pulling dsDNA into and through the RuvAB complex. RuvB forms 2 homohexamers on either side of HJ DNA bound by 1 or 2 RuvA tetramers; 4 subunits per hexamer contact DNA at a time. Coordinated motions by a converter formed by DNA-disengaged RuvB subunits stimulates ATP hydrolysis and nucleotide exchange. Immobilization of the converter enables RuvB to convert the ATP-contained energy into a lever motion, pulling 2 nucleotides of DNA out of the RuvA tetramer per ATP hydrolyzed, thus driving DNA branch migration. The RuvB motors rotate together with the DNA substrate, which together with the progressing nucleotide cycle form the mechanistic basis for DNA recombination by continuous HJ branch migration. Branch migration allows RuvC to scan DNA until it finds its consensus sequence, where it cleaves and resolves cruciform DNA. This Lactobacillus helveticus (strain DPC 4571) protein is Holliday junction branch migration complex subunit RuvB.